Reading from the N-terminus, the 314-residue chain is MEFSMNATVEQLAPVEQQATTDWVVAALYQFKEVADAADLQQRLLDLVKTINLCGTLIVASEGINGTVAGDRHAIDTIREFLLNEGFHAMEYKESHSAEKPFRKMKIKLKQEIVTLGVEVKPRDLVGHYLDPKEWNELISRDDVILVDTRNDYEYKAGTFKGAIDPKTETFREFPDYVKQNLEQHKDKKIAMFCTGGIRCEKSTSLLLQEGFNEVYHLKGGILKYLEETPAEESLWEGECFVFDGRTAVTHGVEEGQNVKCHACGWPLTPEEVALPSYEHGVSCVYCIEKTTEKQKEGFRMRQSQIAAAKRKRL.

Residues 140-234 enclose the Rhodanese domain; sequence SRDDVILVDT…YLEETPAEES (95 aa). Cys-194 acts as the Cysteine persulfide intermediate in catalysis.

Belongs to the TrhO family.

The enzyme catalyses uridine(34) in tRNA + AH2 + O2 = 5-hydroxyuridine(34) in tRNA + A + H2O. Functionally, catalyzes oxygen-dependent 5-hydroxyuridine (ho5U) modification at position 34 in tRNAs. This chain is tRNA uridine(34) hydroxylase, found in Acinetobacter baylyi (strain ATCC 33305 / BD413 / ADP1).